The chain runs to 632 residues: Chaperone protein HtpG (632 aa).

Residues 1–339 (MTQQTMSFQA…SSDLPLNVSR (339 aa)) form an a; substrate-binding region. A b region spans residues 340-559 (EILQESRDVK…DNDMSGYLQR (220 aa)). Residues 560-632 (MLKAAGQSAP…TNALLLSRAA (73 aa)) are c.

This sequence belongs to the heat shock protein 90 family. Homodimer.

Its subcellular location is the cytoplasm. In terms of biological role, molecular chaperone. Has ATPase activity. The chain is Chaperone protein HtpG from Burkholderia mallei (strain NCTC 10247).